The sequence spans 643 residues: MNANPKFLSADAHVDEAAVAPLPNSRKVYVTGSRADIRVPMREISQADTPDSFGGEKNPPVYVYDTSGPYSDPEAKIDIRAGLPALRQAWIEERGDTEALTGLSSDFSRERAADTATADLRFKGLHRTPRRAIAGKNVSQMHYARKGIITPEMEYIAIRENQRRAEYLESLKTSGPNGEKLAAMMGRQHPGQAFGASAFGPNGLTAITPEFVREEVARGRAIIPNNINHPESEPMIIGRNFLVKVNANIGNSAVTSSIGEEVDKMTWAIRWGGDTVMDLSTGKHIHETREWIIRNSPVPIGTVPIYQALEKVNGKAEDLTWEIFRDTLIEQAEQGVDYFTIHAGVRLQYVPLTAKRMTGIVSRGGSIMAKWCLAHHKESFLYEHFEDICEIMKAYDVAFSLGDGLRPGSIYDANDEAQLGELKTLGELTQIAWKHDVQTMIEGPGHVPMQLIKENMDLQLEWCDEAPFYTLGPLTTDIAPGYDHITSGIGAAMIGWFGTAMLCYVTPKEHLGLPNKDDVKTGIITYKLAAHAADLAKGHPGAQVRDNALSKARFEFRWEDQFNLGLDPDKAREFHDETLPKDSAKVAHFCSMCGPHFCSMKITQDVREFAAQQGVTDDEALKKGMEVKSIEFMKKGAEIYQRQ.

Substrate is bound by residues Asn-248, Met-277, Tyr-306, His-342, 362–364, 403–406, and Glu-442; these read SRG and DGLR. A Zn(2+)-binding site is contributed by His-446. Tyr-469 provides a ligand contact to substrate. His-510 lines the Zn(2+) pocket. The [4Fe-4S] cluster site is built by Cys-590, Cys-593, and Cys-598.

It belongs to the ThiC family. As to quaternary structure, homodimer. [4Fe-4S] cluster serves as cofactor.

It catalyses the reaction 5-amino-1-(5-phospho-beta-D-ribosyl)imidazole + S-adenosyl-L-methionine = 4-amino-2-methyl-5-(phosphooxymethyl)pyrimidine + CO + 5'-deoxyadenosine + formate + L-methionine + 3 H(+). The protein operates within cofactor biosynthesis; thiamine diphosphate biosynthesis. Functionally, catalyzes the synthesis of the hydroxymethylpyrimidine phosphate (HMP-P) moiety of thiamine from aminoimidazole ribotide (AIR) in a radical S-adenosyl-L-methionine (SAM)-dependent reaction. The chain is Phosphomethylpyrimidine synthase from Paraburkholderia phytofirmans (strain DSM 17436 / LMG 22146 / PsJN) (Burkholderia phytofirmans).